A 242-amino-acid chain; its full sequence is Small ribosomal subunit protein eS6 (242 aa).

Basic and acidic residues predominate over residues 219–229; the sequence is EKKSEKAEEKK. The interval 219 to 242 is disordered; the sequence is EKKSEKAEEKKRRASSLRTQSVQA. Phosphoserine occurs at positions 233 and 234.

Belongs to the eukaryotic ribosomal protein eS6 family. Phosphorylated.

This Yarrowia lipolytica (strain CLIB 122 / E 150) (Yeast) protein is Small ribosomal subunit protein eS6 (RPS6).